The chain runs to 356 residues: Histidinol-phosphate aminotransferase (356 aa).

N6-(pyridoxal phosphate)lysine is present on K217.

It belongs to the class-II pyridoxal-phosphate-dependent aminotransferase family. Histidinol-phosphate aminotransferase subfamily. Homodimer. Pyridoxal 5'-phosphate is required as a cofactor.

It carries out the reaction L-histidinol phosphate + 2-oxoglutarate = 3-(imidazol-4-yl)-2-oxopropyl phosphate + L-glutamate. Its pathway is amino-acid biosynthesis; L-histidine biosynthesis; L-histidine from 5-phospho-alpha-D-ribose 1-diphosphate: step 7/9. This chain is Histidinol-phosphate aminotransferase, found in Chromobacterium violaceum (strain ATCC 12472 / DSM 30191 / JCM 1249 / CCUG 213 / NBRC 12614 / NCIMB 9131 / NCTC 9757 / MK).